The following is a 274-amino-acid chain: Large ribosomal subunit protein uL2 (274 aa).

Disordered stretches follow at residues 28–53 and 221–274; these read KPYAPLLEKNSKSGGRNNNGRITTRH and RGTA…RTKK. Positions 39 to 48 are enriched in low complexity; it reads KSGGRNNNGR. Residues 253-274 show a composition bias toward basic residues; it reads KGKKTRKNKRTEHFIVHRRTKK.

It belongs to the universal ribosomal protein uL2 family. In terms of assembly, part of the 50S ribosomal subunit. Forms a bridge to the 30S subunit in the 70S ribosome.

One of the primary rRNA binding proteins. Required for association of the 30S and 50S subunits to form the 70S ribosome, for tRNA binding and peptide bond formation. It has been suggested to have peptidyltransferase activity; this is somewhat controversial. Makes several contacts with the 16S rRNA in the 70S ribosome. The protein is Large ribosomal subunit protein uL2 of Proteus mirabilis (strain HI4320).